A 468-amino-acid polypeptide reads, in one-letter code: Probable cytosol aminopeptidase (468 aa).

Mn(2+) is bound by residues K242 and D247. K254 is a catalytic residue. Mn(2+)-binding residues include D265, D324, and E326. R328 is an active-site residue.

It belongs to the peptidase M17 family. It depends on Mn(2+) as a cofactor.

Its subcellular location is the cytoplasm. The enzyme catalyses Release of an N-terminal amino acid, Xaa-|-Yaa-, in which Xaa is preferably Leu, but may be other amino acids including Pro although not Arg or Lys, and Yaa may be Pro. Amino acid amides and methyl esters are also readily hydrolyzed, but rates on arylamides are exceedingly low.. It catalyses the reaction Release of an N-terminal amino acid, preferentially leucine, but not glutamic or aspartic acids.. In terms of biological role, presumably involved in the processing and regular turnover of intracellular proteins. Catalyzes the removal of unsubstituted N-terminal amino acids from various peptides. This is Probable cytosol aminopeptidase from Neisseria meningitidis serogroup A / serotype 4A (strain DSM 15465 / Z2491).